Here is a 140-residue protein sequence, read N- to C-terminus: Nucleoside diphosphate kinase (140 aa).

Positions 11, 59, 87, 93, 104, and 114 each coordinate ATP. Catalysis depends on His-117, which acts as the Pros-phosphohistidine intermediate.

Belongs to the NDK family. Homotetramer. The cofactor is Mg(2+).

It is found in the cytoplasm. The enzyme catalyses a 2'-deoxyribonucleoside 5'-diphosphate + ATP = a 2'-deoxyribonucleoside 5'-triphosphate + ADP. The catalysed reaction is a ribonucleoside 5'-diphosphate + ATP = a ribonucleoside 5'-triphosphate + ADP. Its function is as follows. Major role in the synthesis of nucleoside triphosphates other than ATP. The ATP gamma phosphate is transferred to the NDP beta phosphate via a ping-pong mechanism, using a phosphorylated active-site intermediate. The protein is Nucleoside diphosphate kinase of Methylorubrum extorquens (strain CM4 / NCIMB 13688) (Methylobacterium extorquens).